A 274-amino-acid chain; its full sequence is MCILKISRIWNKILYDVSFLLKKEPILSDFYQSSILQHQSFTSSLSYILSNKLSTSMISEKKIQGIFDDVYLNDRSILNFIVQDIKAVLKRDPAVNDYLTPLLYLKGFHALEAYRISHYLWNTGKKSLSLYLQSRISSEFSVDIHPAAFIGSGVMLDHATGIVIGEGVTIENDVSILHSVTLGGTGKNFSQNRHPTIRKGVVIGAGAKILGNIEVGSGAKIGAGSIVLKNVPSDVTVVGVPAKIVSQVSSKKYYSQKKKNSLKYINIFQHGDGI.

It belongs to the transferase hexapeptide repeat family.

It localises to the cytoplasm. The enzyme catalyses L-serine + acetyl-CoA = O-acetyl-L-serine + CoA. The protein operates within amino-acid biosynthesis; L-cysteine biosynthesis; L-cysteine from L-serine: step 1/2. This is Serine acetyltransferase (cysE) from Buchnera aphidicola subsp. Acyrthosiphon pisum (strain APS) (Acyrthosiphon pisum symbiotic bacterium).